We begin with the raw amino-acid sequence, 132 residues long: Small ribosomal subunit protein uS8 (132 aa).

It belongs to the universal ribosomal protein uS8 family. As to quaternary structure, part of the 30S ribosomal subunit. Contacts proteins S5 and S12.

Its function is as follows. One of the primary rRNA binding proteins, it binds directly to 16S rRNA central domain where it helps coordinate assembly of the platform of the 30S subunit. This chain is Small ribosomal subunit protein uS8, found in Francisella tularensis subsp. holarctica (strain FTNF002-00 / FTA).